A 408-amino-acid polypeptide reads, in one-letter code: CinA-like protein (408 aa).

Belongs to the CinA family.

This Thermotoga sp. (strain RQ2) protein is CinA-like protein.